Consider the following 304-residue polypeptide: Protoheme IX farnesyltransferase (304 aa).

The next 7 membrane-spanning stretches (helical) occupy residues 24-44 (VMTLVIFTGLCGLLAAPGTIH), 45-65 (PVIAFTAILCIAVGAGGAAAL), 107-127 (VFVMGLGVGWLAAVILAFSIF), 145-165 (IVIGGGAGAFPPMIGWVAVTG), 172-192 (VLLFLIIFMWTPPHFWALALF), 234-254 (WIGGAGAVYGWSALVLGLVFV), and 277-297 (LFGYSVLYLFVLFGMLVGDRL).

It belongs to the UbiA prenyltransferase family. Protoheme IX farnesyltransferase subfamily.

Its subcellular location is the cell inner membrane. It catalyses the reaction heme b + (2E,6E)-farnesyl diphosphate + H2O = Fe(II)-heme o + diphosphate. Its pathway is porphyrin-containing compound metabolism; heme O biosynthesis; heme O from protoheme: step 1/1. In terms of biological role, converts heme B (protoheme IX) to heme O by substitution of the vinyl group on carbon 2 of heme B porphyrin ring with a hydroxyethyl farnesyl side group. This chain is Protoheme IX farnesyltransferase, found in Novosphingobium aromaticivorans (strain ATCC 700278 / DSM 12444 / CCUG 56034 / CIP 105152 / NBRC 16084 / F199).